A 915-amino-acid chain; its full sequence is Metabotropic glutamate receptor 7 (915 aa).

Residues 1–34 (MVQLRKLLRVLTLMKFPCCVLEVLLCALAAAARG) form the signal peptide. The Extracellular segment spans residues 35–590 (QEMYAPHSIR…IIKLEWHSPW (556 aa)). The cysteines at positions 67 and 109 are disulfide-linked. An N-linked (GlcNAc...) asparagine glycan is attached at asparagine 98. L-glutamate is bound by residues serine 159, 180–182 (AST), tyrosine 230, and aspartate 314. 7 cysteine pairs are disulfide-bonded: cysteine 249–cysteine 541, cysteine 374–cysteine 390, cysteine 430–cysteine 437, cysteine 523–cysteine 542, cysteine 527–cysteine 545, cysteine 548–cysteine 560, and cysteine 563–cysteine 576. Lysine 407 contributes to the L-glutamate binding site. Asparagine 458 and asparagine 486 each carry an N-linked (GlcNAc...) asparagine glycan. An N-linked (GlcNAc...) asparagine glycan is attached at asparagine 572. A helical membrane pass occupies residues 591-615 (AVIPVFLAMLGIIATIFVMATFIRY). The Cytoplasmic portion of the chain corresponds to 616 to 627 (NDTPIVRASGRE). Residues 628 to 648 (LSYVLLTGIFLCYIITFLMIA) traverse the membrane as a helical segment. Topologically, residues 649 to 654 (KPDVAV) are extracellular. The chain crosses the membrane as a helical span at residues 655–675 (CSFRRVFLGLGMCISYAALLT). Over 676–702 (KTNRIYRIFEQGKKSVTAPRLISPTSQ) the chain is Cytoplasmic. A helical transmembrane segment spans residues 703-723 (LAITSSLISVQLLGVFIWFGV). The Extracellular portion of the chain corresponds to 724 to 753 (DPPNIIIDYDEHKTMNPEQARGVLKCDITD). Residues 754–775 (LQIICSLGYSILLMVTCTVYAI) form a helical membrane-spanning segment. Topologically, residues 776 to 788 (KTRGVPENFNEAK) are cytoplasmic. Residues 789-810 (PIGFTMYTTCIVWLAFIPIFFG) form a helical membrane-spanning segment. The Extracellular portion of the chain corresponds to 811 to 825 (TAQSAEKLYIQTTTL). A helical membrane pass occupies residues 826–850 (TISMNLSASVALGMLYMPKVYIIIF). Topologically, residues 851 to 915 (HPELNVQKRK…KYVSYNNLVI (65 aa)) are cytoplasmic. Residues 874–895 (SRLSHKPSDRPNGEAKTELCEN) form a disordered region. Residues 879–892 (KPSDRPNGEAKTEL) are compositionally biased toward basic and acidic residues. Position 900 is a phosphoserine (serine 900).

Belongs to the G-protein coupled receptor 3 family. Homodimer. Interacts with PICK1. Post-translationally, N-glycosylated. Expressed in many areas of the brain, especially in the cerebral cortex, hippocampus, and cerebellum. Expression of GRM7 isoforms in non-neuronal tissues appears to be restricted to isoform 3 and isoform 4.

Its subcellular location is the cell membrane. G-protein coupled receptor activated by glutamate that regulates axon outgrowth through the MAPK-cAMP-PKA signaling pathway during neuronal development. Ligand binding causes a conformation change that triggers signaling via guanine nucleotide-binding proteins (G proteins) and modulates the activity of downstream effectors, such as adenylate cyclase that it inhibits. The protein is Metabotropic glutamate receptor 7 (GRM7) of Homo sapiens (Human).